A 303-amino-acid chain; its full sequence is Beta-carotene 3-hydroxylase 2, chloroplastic (303 aa).

A chloroplast-targeting transit peptide spans 1-52 (MAAGLSTIAVTLKPLNRSSFSANHPISTAVFPPSLRFNGFRRRKILTVCFVV). Helical transmembrane passes span 96–116 (YLIA…MAVY) and 130–150 (VLEM…MEFW). Residues 143–270 (AAVGMEFWAR…KFKGVPYGLF (128 aa)) form the Fatty acid hydroxylase domain. The Histidine box-1 signature appears at 155-160 (HRALWH). The Histidine box-2 signature appears at 165 to 171 (NMHESHH). 2 helical membrane passes run 180 to 200 (LNDV…YYGF) and 206 to 226 (VPGL…AYMF). A Histidine box-3 motif is present at residues 228–233 (HDGLVH). The Histidine box-4 signature appears at 254–258 (HQLHH).

It belongs to the sterol desaturase family. As to quaternary structure, homodimer. Expressed in leaves, flowers, stems, roots and siliques.

Its subcellular location is the plastid. The protein resides in the chloroplast membrane. The enzyme catalyses all-trans-beta-carotene + 4 reduced [2Fe-2S]-[ferredoxin] + 2 O2 + 4 H(+) = all-trans-zeaxanthin + 4 oxidized [2Fe-2S]-[ferredoxin] + 2 H2O. Nonheme diiron monooxygenase involved in the biosynthesis of xanthophylls. Specific for beta-ring hydroxylations of beta-carotene. Also has a low activity toward the beta- and epsilon-rings of alpha-carotene. No activity with acyclic carotenoids such as lycopene and neurosporene. Uses ferredoxin as an electron donor. The sequence is that of Beta-carotene 3-hydroxylase 2, chloroplastic (BETA-OHASE 2) from Arabidopsis thaliana (Mouse-ear cress).